The sequence spans 391 residues: Coiled-coil domain-containing protein 85C-A (391 aa).

2 coiled-coil regions span residues 23–87 and 121–146; these read KCSK…ELCC and FQQKLKELESNQDSVMRENLELKEII. Positions 154–212 are disordered; that stretch reads NGAGSRSSIDSQSSLSNLNGGSATVRDVGDGSSTSSTGSAGSPDHHHSHIHKPTEGKIT. Low complexity-rich tracts occupy residues 158-175 and 183-195; these read SRSSIDSQSSLSNLNGGS and DGSSTSSTGSAGS.

The protein belongs to the CCDC85 family.

It is found in the cell junction. The protein resides in the tight junction. It localises to the adherens junction. Functionally, may play a role in cell-cell adhesion and epithelium development through its interaction with proteins of the beta-catenin family. May play an important role in cortical development, especially in the maintenance of radial glia. This is Coiled-coil domain-containing protein 85C-A (ccdc85ca) from Danio rerio (Zebrafish).